Consider the following 474-residue polypeptide: DNA-binding protein (474 aa).

Residues 1-34 (MAGRQREHPTVTPYLQETSPERPPPLPPKKKLRK) form a disordered region. At tyrosine 142 the chain carries Phosphotyrosine; by host. Zn(2+) contacts are provided by cysteine 231 and histidine 233. The segment at 244–278 (VEVDVGSENGQRALKEQPSKTKVVQNRWGRSVVQI) is flexible loop. Zn(2+) is bound by residues cysteine 286, cysteine 302, cysteine 343, cysteine 345, cysteine 397, and cysteine 413. Residues 460-474 (VALPTGHGDAEVEPF) are C-terminal arm, DBP binding.

The protein belongs to the adenoviridae E2A DNA-binding protein family. Homomultimerizes on viral ssDNA bound to pTP. Forms a initiation complex with viral polymerase, pTP and hosts NFIA and POU2F1/OCT1. Interacts with host SRCAP.

It localises to the host nucleus. Plays a role in the elongation phase of viral strand displacement replication by unwinding the template in an ATP-independent fashion, employing its capacity to form multimers. Also enhances the rate of initiation. Released from template upon second strand synthesis. Assembles in complex with viral pTP, viral pol, host NFIA and host POU2F1/OCT1 on viral origin of replication. Covers the whole ssDNA genome during synthesis. The complementary strand synthesis induces its relese from DNA template. May inhibit cellular transcription mediated by the interaction between host SRCAP and CBP. The chain is DNA-binding protein from Homo sapiens (Human).